Consider the following 439-residue polypeptide: Trigger factor (439 aa).

Residues 163 to 248 (GDIAVIDFEG…LNQIKERVLP (86 aa)) form the PPIase FKBP-type domain.

This sequence belongs to the FKBP-type PPIase family. Tig subfamily.

Its subcellular location is the cytoplasm. The catalysed reaction is [protein]-peptidylproline (omega=180) = [protein]-peptidylproline (omega=0). Functionally, involved in protein export. Acts as a chaperone by maintaining the newly synthesized protein in an open conformation. Functions as a peptidyl-prolyl cis-trans isomerase. This chain is Trigger factor, found in Syntrophotalea carbinolica (strain DSM 2380 / NBRC 103641 / GraBd1) (Pelobacter carbinolicus).